The following is a 67-amino-acid chain: UPF0437 protein y4xE (67 aa).

This sequence belongs to the UPF0437 family.

This Sinorhizobium fredii (strain NBRC 101917 / NGR234) protein is UPF0437 protein y4xE.